Consider the following 166-residue polypeptide: Interferon gamma (166 aa).

An N-terminal signal peptide occupies residues M1–C23. Residue Q24 is modified to Pyrrolidone carboxylic acid. N-linked (GlcNAc...) asparagine glycosylation is found at N39 and N106. Residues A147 to Q166 are disordered. The span at N148–Q166 shows a compositional bias: basic residues.

Belongs to the type II (or gamma) interferon family. As to quaternary structure, homodimer. Interacts with IFNGR1 (via extracellular domain); this interaction promotes IFNGR1 dimerization. Released primarily from activated T lymphocytes.

Its subcellular location is the secreted. In terms of biological role, type II interferon produced by immune cells such as T-cells and NK cells that plays crucial roles in antimicrobial, antiviral, and antitumor responses by activating effector immune cells and enhancing antigen presentation. Primarily signals through the JAK-STAT pathway after interaction with its receptor IFNGR1 to affect gene regulation. Upon IFNG binding, IFNGR1 intracellular domain opens out to allow association of downstream signaling components JAK2, JAK1 and STAT1, leading to STAT1 activation, nuclear translocation and transcription of IFNG-regulated genes. Many of the induced genes are transcription factors such as IRF1 that are able to further drive regulation of a next wave of transcription. Plays a role in class I antigen presentation pathway by inducing a replacement of catalytic proteasome subunits with immunoproteasome subunits. In turn, increases the quantity, quality, and repertoire of peptides for class I MHC loading. Increases the efficiency of peptide generation also by inducing the expression of activator PA28 that associates with the proteasome and alters its proteolytic cleavage preference. Up-regulates as well MHC II complexes on the cell surface by promoting expression of several key molecules such as cathepsins B/CTSB, H/CTSH, and L/CTSL. Participates in the regulation of hematopoietic stem cells during development and under homeostatic conditions by affecting their development, quiescence, and differentiation. The chain is Interferon gamma (IFNG) from Equus caballus (Horse).